The primary structure comprises 364 residues: F-box/LRR-repeat protein At1g55660 (364 aa).

The F-box domain maps to 52-98 (MDKISQLPDELLVKVLSFLSTKDAVSTSILSMRWKSLWMWLPKLEYN). 6 LRR repeats span residues 158-179 (NVRELSLKLFNFAELPTKLPKS), 185-206 (SIVILKLKDEILVDVPRKVCLP), 207-228 (SLKTLFLGRVTYSDANSLHRLL), 233-254 (VLEDLVMERDKIDNLGKLSVIV), 256-277 (SLQRLTLKMSRPCHLDGLKMNS), and 279-300 (SLKYLKVIDERLESDSDDESDS).

The polypeptide is F-box/LRR-repeat protein At1g55660 (Arabidopsis thaliana (Mouse-ear cress)).